We begin with the raw amino-acid sequence, 252 residues long: Indole-3-glycerol phosphate synthase (252 aa).

The protein belongs to the TrpC family.

The catalysed reaction is 1-(2-carboxyphenylamino)-1-deoxy-D-ribulose 5-phosphate + H(+) = (1S,2R)-1-C-(indol-3-yl)glycerol 3-phosphate + CO2 + H2O. The protein operates within amino-acid biosynthesis; L-tryptophan biosynthesis; L-tryptophan from chorismate: step 4/5. The polypeptide is Indole-3-glycerol phosphate synthase (Leptospira interrogans serogroup Icterohaemorrhagiae serovar copenhageni (strain Fiocruz L1-130)).